The primary structure comprises 246 residues: Dof zinc finger protein DOF4.7 (246 aa).

2 stretches are compositionally biased toward polar residues: residues 1–12 (MMTSSHQSNTTG) and 27–37 (QINNKEPSPAT). Residues 1-39 (MMTSSHQSNTTGFKPRRIKTTAKPPRQINNKEPSPATQP) form a disordered region. The Dof-type zinc finger occupies 41–95 (LKCPRCDSVNTKFCYYNNYSLSQPRHYCKNCRRYWTRGGALRNVPIGGSTRNKNK). Residues Cys-43, Cys-46, Cys-68, and Cys-71 each coordinate Zn(2+). The tract at residues 216 to 235 (GGATSGNHEDNDDGEGNLGN) is disordered.

As to quaternary structure, interacts with ZFP2. In terms of tissue distribution, highly expressed at the base of all organs of the flower, especially in the abscission zone (AZ) of petals, stamens and sepals. Expressed at low levels in sepals, filaments, stigmatic papillae, tips of young siliques, and at the base of pedicels and leaf trichomes.

Its subcellular location is the nucleus. In terms of biological role, transcription factor that binds specifically to a 5'-AA[AG]G-3' consensus core sequence. Involved in the negative regulation of floral organ abscission by binding to the typical DOF 5'-AAAG-3' sequences in the promoter of ADPG2/PGAZAT, and by down-regulating its expression. ADPG2/PGAZAT is an abscission-related and cell wall hydrolyzing polygalacturonase. May act through the interaction with ZFP2, an abscission-related transcription factor. The polypeptide is Dof zinc finger protein DOF4.7 (Arabidopsis thaliana (Mouse-ear cress)).